Here is a 99-residue protein sequence, read N- to C-terminus: NADH-quinone oxidoreductase subunit K (99 aa).

The next 3 helical transmembrane spans lie at 3-23, 28-48, and 59-79; these read LVNYLVLSGLLFTIGAATVLV, IIMFMGVELMLNASNLAFVAF, and VVAFFVMVVAAAEVVVGLAII.

The protein belongs to the complex I subunit 4L family. NDH-1 is composed of 14 different subunits. Subunits NuoA, H, J, K, L, M, N constitute the membrane sector of the complex.

Its subcellular location is the cell membrane. It carries out the reaction a quinone + NADH + 5 H(+)(in) = a quinol + NAD(+) + 4 H(+)(out). Functionally, NDH-1 shuttles electrons from NADH, via FMN and iron-sulfur (Fe-S) centers, to quinones in the respiratory chain. The immediate electron acceptor for the enzyme in this species is believed to be a menaquinone. Couples the redox reaction to proton translocation (for every two electrons transferred, four hydrogen ions are translocated across the cytoplasmic membrane), and thus conserves the redox energy in a proton gradient. The polypeptide is NADH-quinone oxidoreductase subunit K (Beutenbergia cavernae (strain ATCC BAA-8 / DSM 12333 / CCUG 43141 / JCM 11478 / NBRC 16432 / NCIMB 13614 / HKI 0122)).